The chain runs to 952 residues: Chaperone protein ClpC2, chloroplastic (952 aa).

Residues 1–45 (MAWSIALLTPPFFGPGRHVQAKEYREPRGCVMKMSSLKAPVLRIQ) constitute a chloroplast transit peptide. The Clp R domain maps to 115 to 257 (FERFTEKAIK…RTQVIRMVGE (143 aa)). Repeat stretches follow at residues 118 to 183 (FTEK…IGRG) and 193 to 257 (FTPR…MVGE). Residues 278 to 525 (LEEYGTNLTK…RVRLRHAQLP (248 aa)) form an i region. 323 to 330 (GEPGVGKT) is a binding site for ATP. The UVR domain occupies 532-567 (EKQLRQITKEKNEAVRSQDFEMAGSHRDREIELKAE). The interval 592 to 783 (VTESDIQHIV…LLIMTSNVGS (192 aa)) is II. 666 to 673 (GPTGVGKS) provides a ligand contact to ATP.

This sequence belongs to the ClpA/ClpB family. ClpC subfamily. Homodimer and homohexamer. Hexamerization upon addition of ATP. Interacts with CLPT1. Interacts with CLPS1. Stably associated with the import machinery. Interacts with CLPF. Requires Mg(2+) as cofactor. As to expression, expressed at low levels in roots and inflorescences. Expressed at very low levels in rosette leaves. Expressed in photosynthetic green tissues with high levels in young, developing leaf tissues.

It is found in the plastid. The protein resides in the chloroplast stroma. The protein localises to the chloroplast membrane. It carries out the reaction ATP + H2O = ADP + phosphate + H(+). In terms of biological role, molecular chaperone. May act as a suppressor of FtsH-mediated thylakoid membrane biogenesis and may enhance photoinhibition. Seems not involved in chloroplastic protein import. Probable component of the TIC-associated stromal import motor involved in inner membrane translocation. Has an ATPase activity, but no ADPase activity. Interacts with transit peptides with a positional preference. Localization of the signal sequence at the N-terminal end of a protein seems mandatory for interaction to take place. The sequence is that of Chaperone protein ClpC2, chloroplastic from Arabidopsis thaliana (Mouse-ear cress).